The chain runs to 229 residues: Glutathione S-transferase 1 (229 aa).

The 85-residue stretch at Ala2–Arg86 folds into the GST N-terminal domain. In terms of domain architecture, GST C-terminal spans Asp93–Asn229.

The protein belongs to the GST superfamily.

It catalyses the reaction RX + glutathione = an S-substituted glutathione + a halide anion + H(+). In terms of biological role, involved in the oxidative stress response and detoxification. The polypeptide is Glutathione S-transferase 1 (gst1) (Schizosaccharomyces pombe (strain 972 / ATCC 24843) (Fission yeast)).